A 353-amino-acid chain; its full sequence is Methylthioribose-1-phosphate isomerase (353 aa).

Substrate contacts are provided by residues 51-53 (RGA), R94, and Q203. Catalysis depends on D244, which acts as the Proton donor. Position 254 to 255 (254 to 255 (NK)) interacts with substrate.

Belongs to the eIF-2B alpha/beta/delta subunits family. MtnA subfamily.

The catalysed reaction is 5-(methylsulfanyl)-alpha-D-ribose 1-phosphate = 5-(methylsulfanyl)-D-ribulose 1-phosphate. It participates in amino-acid biosynthesis; L-methionine biosynthesis via salvage pathway; L-methionine from S-methyl-5-thio-alpha-D-ribose 1-phosphate: step 1/6. Its function is as follows. Catalyzes the interconversion of methylthioribose-1-phosphate (MTR-1-P) into methylthioribulose-1-phosphate (MTRu-1-P). In Nostoc punctiforme (strain ATCC 29133 / PCC 73102), this protein is Methylthioribose-1-phosphate isomerase.